A 415-amino-acid chain; its full sequence is Gamma-glutamyl phosphate reductase (415 aa).

Belongs to the gamma-glutamyl phosphate reductase family.

The protein resides in the cytoplasm. The catalysed reaction is L-glutamate 5-semialdehyde + phosphate + NADP(+) = L-glutamyl 5-phosphate + NADPH + H(+). It participates in amino-acid biosynthesis; L-proline biosynthesis; L-glutamate 5-semialdehyde from L-glutamate: step 2/2. Functionally, catalyzes the NADPH-dependent reduction of L-glutamate 5-phosphate into L-glutamate 5-semialdehyde and phosphate. The product spontaneously undergoes cyclization to form 1-pyrroline-5-carboxylate. The sequence is that of Gamma-glutamyl phosphate reductase from Mycolicibacterium vanbaalenii (strain DSM 7251 / JCM 13017 / BCRC 16820 / KCTC 9966 / NRRL B-24157 / PYR-1) (Mycobacterium vanbaalenii).